The chain runs to 475 residues: Probable proline--tRNA ligase, mitochondrial (475 aa).

A mitochondrion-targeting transit peptide spans 1-29 (MEGLLTRCRALPALATCSRQLSGYVPCRF).

This sequence belongs to the class-II aminoacyl-tRNA synthetase family.

It localises to the mitochondrion matrix. It catalyses the reaction tRNA(Pro) + L-proline + ATP = L-prolyl-tRNA(Pro) + AMP + diphosphate. In terms of biological role, mitochondrial aminoacyl-tRNA synthetase that catalyzes the specific attachment of the proline amino acid (aa) to the homologous transfer RNA (tRNA), further participating in protein synthesis. The reaction occurs in a two steps: proline is first activated by ATP to form Pro-AMP and then transferred to the acceptor end of tRNA(Pro). The sequence is that of Probable proline--tRNA ligase, mitochondrial from Homo sapiens (Human).